A 370-amino-acid chain; its full sequence is MDGVKANQRQQLQLLLVAARHQLSRSDLRSMIQFLENEDCGFDVTLQMADPSEQPELLELHRLVATPALIKLSPTPKQVFAGSSIFQQLQNWITRWQQDIVVTGLGLSLRPTELDGSRTQRELQLEDQLLVLRQENETLIDRLNAQERTLRMVAHELRTPLTAAVLALQSQQLGQINIEHFQDVVKRRLDEIELLSKDLLEVKSTRWEDLFNPQNLDLGNIAAEAILELEKLWLDRNIEIHTDIPSDLPKVFADQRRMRQVLLNLLENALKFTEDGGQVSLSMLHRTSQWVQVSICDNGPGIPEDEQERIFLDRVRLPQTSVTTSGFGVGLSVCRRIVEVHGGKIWVVSEPDKGACFYLTVPVWQRNGQE.

Positions 152-365 constitute a Histidine kinase domain; it reads MVAHELRTPL…CFYLTVPVWQ (214 aa). His155 bears the Phosphohistidine; by autocatalysis mark.

Homooligomerizes. Interacts with KaiC. Participates in the KaiBC complex, whose core is composed of a KaiC homohexamer and 6 KaiB.

The enzyme catalyses ATP + protein L-histidine = ADP + protein N-phospho-L-histidine.. Functionally, member of the two-component regulatory system SasA/RpaA involved in genome-wide circadian gene expression. One of several clock output pathways. Participates in the Kai clock protein complex, the main circadian regulator in cyanobacteria, via its interaction with KaiC. KaiC enhances the autophosphorylation activity of SasA, which then transfers its phosphate group to RpaA to activate it. In addition to its output function, recruits fold-shifted KaiB (KaiB(fs)) to KaiC to cooperatively form the KaiB(6):KaiC(6) complex (independent of SasA kinase activity). Required for robustness of the circadian rhythm of gene expression and is involved in clock output, also required for adaptation to light/dark cycles. The protein is Adaptive-response sensory kinase SasA of Prochlorococcus marinus (strain MIT 9303).